A 273-amino-acid polypeptide reads, in one-letter code: Neuferricin (273 aa).

The signal sequence occupies residues 1-22 (MLGYLAAAALCLAAVLLMRLDH). Residues 44 to 143 (GRLMSKEELS…QNYITIGKLT (100 aa)) form the Cytochrome b5 heme-binding domain.

This sequence belongs to the cytochrome b5 family. MAPR subfamily.

It localises to the secreted. In terms of biological role, heme-binding protein which promotes neuronal but not astrocyte differentiation. The polypeptide is Neuferricin (cyb5d2) (Xenopus tropicalis (Western clawed frog)).